Consider the following 115-residue polypeptide: U3-lycotoxin-Ls1a (115 aa).

A signal peptide spans M1–A20. Positions E21–R44 are excised as a propeptide. Cystine bridges form between C48/C63, C55/C72, C62/C87, and C74/C85.

Belongs to the neurotoxin 19 (CSTX) family. 01 subfamily. In terms of tissue distribution, expressed by the venom gland.

Its subcellular location is the secreted. The protein is U3-lycotoxin-Ls1a of Lycosa singoriensis (Wolf spider).